The primary structure comprises 87 residues: Small ribosomal subunit protein uS17 (87 aa).

The protein belongs to the universal ribosomal protein uS17 family. In terms of assembly, part of the 30S ribosomal subunit.

In terms of biological role, one of the primary rRNA binding proteins, it binds specifically to the 5'-end of 16S ribosomal RNA. This is Small ribosomal subunit protein uS17 from Syntrophobacter fumaroxidans (strain DSM 10017 / MPOB).